The chain runs to 60 residues: Putative potassium channel blocker TXKS1 (60 aa).

An N-terminal signal peptide occupies residues 1–28; the sequence is MNRLTTIILMLIVINVIMDDISESKVAA. Disulfide bonds link cysteine 32-cysteine 49, cysteine 35-cysteine 55, and cysteine 39-cysteine 57. Lysine amide is present on lysine 59.

As to expression, expressed by the venom gland.

The protein resides in the secreted. Inhibits potassium channels. This is Putative potassium channel blocker TXKS1 from Olivierus martensii (Manchurian scorpion).